The chain runs to 989 residues: Voltage-gated delayed rectifier potassium channel KCNH1 (989 aa).

The Cytoplasmic segment spans residues 1–220 (MTMAGGRRGL…LHYCVFKTTW (220 aa)). Positions 14–94 (QNTFLENIVR…QTFENYEMNS (81 aa)) constitute a PAS domain. Residues 93-145 (NSFEILMYKKNRTPVWFFVKIAPIRNEQDKVVLFLCTFSDITAFKQPIEDDSC) enclose the PAC domain. Residues 151–162 (FARLTRALTSSR) form a required for phosphatidylinositol bisphosphate binding region. Residues 221 to 241 (DWIILILTFYTAILVPYNVSF) traverse the membrane as a helical segment. Residues 242-248 (KTRQNNV) are Extracellular-facing. Residues 249 to 269 (AWLVVDSIVDVIFLVDIVLNF) traverse the membrane as a helical segment. At 270–290 (HTTFVGPAGEVISDPKLIRMN) the chain is on the cytoplasmic side. The chain crosses the membrane as a helical span at residues 291–309 (YLKTWFVIDLLSCLPYDVI). Residues 310-345 (NAFENVDEVSAFMGDPGKIGFADQIPPPLEGRESQG) are Extracellular-facing. A helical; Voltage-sensor membrane pass occupies residues 346 to 368 (ISSLFSSLKVVRLLRLGRVARKL). The Cytoplasmic segment spans residues 369 to 377 (DHYIEYGAA). A helical transmembrane segment spans residues 378-399 (VLVLLVCVFGLAAHWMACIWYS). Topologically, residues 400–448 (IGDYEIFDEDTKTIRNNSWLYQLALDIGTPYQFNGSGSGKWEGGPSKNS) are extracellular. N415 and N433 each carry an N-linked (GlcNAc...) asparagine glycan. The segment at residues 449 to 470 (VYISSLYFTMTSLTSVGFGNIA) is an intramembrane region (pore-forming). The Selectivity filter signature appears at 463–468 (SVGFGN). Topologically, residues 471–477 (PSTDIEK) are extracellular. The chain crosses the membrane as a helical span at residues 478-498 (IFAVAIMMIGSLLYATIFGNV). The Cytoplasmic portion of the chain corresponds to 499-989 (TTIFQQMYAN…ESDRDIFGAS (491 aa)). Positions 673–770 (KRDALQKVLE…LDDLDVEKGN (98 aa)) are calmodulin-binding. The tract at residues 699 to 701 (YNL) is interaction with cyclic nucleotide-binding pocket. Basic and acidic residues-rich tracts occupy residues 857-879 (ESME…KTDS) and 887-901 (SDLR…RSPQ). 2 disordered regions span residues 857–905 (ESME…DRSP) and 961–989 (RGSA…FGAS). The segment at 924-964 (ATVLEVKYELKEDIKALNAKMTSIEKQLSEILRILMSRGSA) is CAD (involved in subunit assembly). The segment covering 962-979 (GSAQSPQETGEISRPQSP) has biased composition (polar residues). Residues S974, S978, and S981 each carry the phosphoserine modification. Basic and acidic residues predominate over residues 980 to 989 (ESDRDIFGAS).

The protein belongs to the potassium channel family. H (Eag) (TC 1.A.1.20) subfamily. Kv10.1/KCNH1 sub-subfamily. In terms of assembly, homomultimer. The potassium channel is composed of a homo- or heterotetrameric complex of pore-forming alpha subunits that can associate with modulating beta subunits. Heteromultimer with KCNH5/EAG2. Interacts with ALG10B. Interacts with RABEP1. Interacts (via C-terminus) with CTTN. Interacts (via C-terminal cytoplasmic region) with Ca(2+)-bound calmodulin. Channel activity is regulated via tyrosine phosphorylation/dephosphorylation by SRC and PTPN6. Detected in brain (at protein level). Highly expressed in olfactory bulb. Detected in brain cortex, hippocampus, brain stem, striatum, thalamus, hypothalamus and spinal cord.

Its subcellular location is the cell membrane. The protein resides in the nucleus inner membrane. It is found in the cell projection. It localises to the dendrite. The protein localises to the axon. Its subcellular location is the presynaptic cell membrane. The protein resides in the perikaryon. It is found in the postsynaptic density membrane. It localises to the early endosome membrane. It catalyses the reaction K(+)(in) = K(+)(out). Channel activity is inhibited by interaction with Ca(2+)-bound calmodulin. Interaction of a single pore-forming alpha subunit with a calmodulin chain is sufficient to promote channel closure. Channel activity is not regulated by cyclic nucleotides. Channel activity is inhibited by binding intracellular phosphatidylinositol-3,5-bisphosphate and phosphatidylinositol-4,5-bisphosphate (PIP2), but is not inhibited by phosphatidylinositol 4-phosphate. Its function is as follows. Pore-forming (alpha) subunit of a voltage-gated delayed rectifier potassium channel that mediates outward-rectifying potassium currents which, on depolarization, reaches a steady-state level and do not inactivate. The activation kinetics depend on the prepulse potential and external divalent cation concentration. With negative prepulses, the current activation is delayed and slowed down several fold, whereas more positive prepulses speed up activation. The time course of activation is biphasic with a fast and a slowly activating current component. Activates at more positive membrane potentials and exhibit a steeper activation curve. Channel properties are modulated by subunit assembly. Mediates IK(NI) current in myoblasts. Involved in the regulation of cell proliferation and differentiation, in particular adipogenic and osteogenic differentiation in bone marrow-derived mesenchymal stem cells (MSCs). The protein is Voltage-gated delayed rectifier potassium channel KCNH1 of Mus musculus (Mouse).